We begin with the raw amino-acid sequence, 1461 residues long: Potassium channel K2 (1461 aa).

6 helical membrane passes run 44-64 (IIEG…LIYI), 142-162 (FNYY…YISL), 183-203 (IYNM…MVII), 218-238 (LIDI…IFVF), 242-262 (IDIY…NVSY), and 281-301 (IVLG…TIQA). Positions 322-340 (YFYFSIISISTVGYGDIFP) form an intramembrane region, pore-forming. The helical transmembrane segment at 349–369 (CIIFIFWTFIWVPIQFNDLII) threads the bilayer. The tract at residues 771–794 (KRDDFDNNNNNNNNNIVKSRKKGR) is disordered.

May form oligomers or interact with other proteins.

Its subcellular location is the membrane. In terms of biological role, contributes to transmembrane potassium transport. The chain is Potassium channel K2 from Plasmodium falciparum (isolate 3D7).